An 85-amino-acid chain; its full sequence is MQTVTMYTGPFCPYCAMAKRLLHAAGVGHIDEIRVDASPEAFAEMQQLSGQRSVPQIFIGETHVGGFTDLYRLQQEGGLDGLLNP.

Residues 1–85 (MQTVTMYTGP…EGGLDGLLNP (85 aa)) enclose the Glutaredoxin domain. Residues C12 and C15 are joined by a disulfide bond.

The protein belongs to the glutaredoxin family. As to quaternary structure, monomer.

Its subcellular location is the cytoplasm. Functionally, has a glutathione-disulfide oxidoreductase activity in the presence of NADPH and glutathione reductase. Reduces low molecular weight disulfides and proteins. This chain is Glutaredoxin (grx), found in Neisseria meningitidis serogroup B (strain ATCC BAA-335 / MC58).